The sequence spans 358 residues: Ornithine cyclodeaminase (358 aa).

L-ornithine is bound by residues Arg-52 and Lys-76. NAD(+)-binding positions include Thr-91, Arg-119, 146–147, Asp-168, Thr-208, 231–234, Lys-238, and Ser-299; these read AQ and VGGD. L-ornithine is bound at residue Arg-119. Asp-234 is a binding site for L-ornithine. Catalysis depends on Asp-234, which acts as the Proton donor/acceptor. An L-ornithine-binding site is contributed by Val-300.

It belongs to the ornithine cyclodeaminase/mu-crystallin family. It depends on NAD(+) as a cofactor.

It carries out the reaction L-ornithine = L-proline + NH4(+). The protein operates within amino-acid biosynthesis; L-proline biosynthesis; L-proline from L-ornithine: step 1/1. Catalyzes the conversion of L-ornithine into L-proline with release of ammonia. The chain is Ornithine cyclodeaminase from Brucella suis biovar 1 (strain 1330).